A 453-amino-acid polypeptide reads, in one-letter code: Ribosome biogenesis protein YTM1 (453 aa).

Residues 19-102 (VKVRFFTNEE…ETVIDLQYTR (84 aa)) form a ubiquitin-like (UBL) domain region. A sufficient for interaction with ERB1 and association with 66S pre-ribosomes region spans residues 112–453 (SFTNEDWISS…KKIDIYREAN (342 aa)). WD repeat units follow at residues 128-166 (GHGAVLASNMKLQESKILSGSYDGVVRTYNMSGEVESQY), 168-206 (GHSGPVKSVRWISPTRIVSAGNDHSLRLWKTKLAGVEEG), 218-257 (GHKGPVVDLAVDYKSNKIISAGNDSVVGVWSTNASDMSAV), 292-332 (GHGQ…CVDT), 334-373 (STGFSLLSILQLPNLHLVASGSSARHINLHDPRASSSTEQ), 380-420 (GHTN…AMYT), and 422-453 (GKGGKVFGVSWDPIGIVSGGEDKKIDIYREAN).

Belongs to the WD repeat WDR12/YTM1 family. In terms of assembly, component of the NOP7 complex, composed of ERB1, NOP7 and YTM1. The complex is held together by ERB1, which interacts with NOP7 via its N-terminal domain and with YTM1 via a high-affinity interaction between the seven-bladed beta-propeller domains of the 2 proteins. The NOP7 complex associates with the 66S pre-ribosome. Interacts (via UBL domain) with MDN1 (via VWFA/MIDAS domain).

The protein resides in the nucleus. Its subcellular location is the nucleolus. The protein localises to the nucleoplasm. In terms of biological role, component of the NOP7 complex, which is required for maturation of the 25S and 5.8S ribosomal RNAs and formation of the 60S ribosome. This Meyerozyma guilliermondii (strain ATCC 6260 / CBS 566 / DSM 6381 / JCM 1539 / NBRC 10279 / NRRL Y-324) (Yeast) protein is Ribosome biogenesis protein YTM1.